Consider the following 356-residue polypeptide: Phosphoribosylformylglycinamidine cyclo-ligase (356 aa).

Belongs to the AIR synthase family.

Its subcellular location is the cytoplasm. It carries out the reaction 2-formamido-N(1)-(5-O-phospho-beta-D-ribosyl)acetamidine + ATP = 5-amino-1-(5-phospho-beta-D-ribosyl)imidazole + ADP + phosphate + H(+). It participates in purine metabolism; IMP biosynthesis via de novo pathway; 5-amino-1-(5-phospho-D-ribosyl)imidazole from N(2)-formyl-N(1)-(5-phospho-D-ribosyl)glycinamide: step 2/2. In Sinorhizobium fredii (strain NBRC 101917 / NGR234), this protein is Phosphoribosylformylglycinamidine cyclo-ligase.